A 179-amino-acid polypeptide reads, in one-letter code: ADP-ribosylation factor-like protein 5A (179 aa).

Glycine 2 is lipidated: N-myristoyl glycine. GTP contacts are provided by residues glycine 23 to threonine 30, aspartate 66 to glutamine 70, asparagine 125 to aspartate 128, and alanine 159.

The protein belongs to the small GTPase superfamily. Arf family.

In terms of biological role, lacks ADP-ribosylation enhancing activity. The chain is ADP-ribosylation factor-like protein 5A (ARL5A) from Homo sapiens (Human).